The primary structure comprises 950 residues: Oxysterol-binding protein-related protein 1 (950 aa).

The interaction with RAB7A stretch occupies residues 1 to 237 (MNTEAEQQLL…NKVVHKALKR (237 aa)). ANK repeat units follow at residues 47 to 76 (LGWTPLHLACYFGHKQVVEDLLKAGAKVNM), 80 to 109 (MGDTPLHRAAFTGRKELVLLLLEYDADSTV), and 175 to 204 (LGNTPLHCAAYRAHKQCVLKLLRSGADPSL). A PH domain is found at 235–334 (LKRYEGPLWK…WLEAIEEHSA (100 aa)). Residues 430–463 (NFKLEQEQEKNKILSEALETLATEHHELERSLVE) adopt a coiled-coil conformation. The short motif at 469-483 (SILSEEEFYDALSGS) is the FFAT element. Residue S499 is modified to Phosphoserine. Disordered regions lie at residues 502–530 (ENEVPGSSGKHRMSEGKDCGGGDALSNGI) and 795–821 (KKNTEEKKNSKQTSSSEESDEMPVPDS). A coiled-coil region spans residues 879–913 (RAMENGEIDLASEEKKRLEEKQRAARKNRSKSEED).

This sequence belongs to the OSBP family. As to quaternary structure, interacts (via FFAT motif) with VAPA and VAPB. Interacts with the GTP-bound form of RAB7A. Interacts with OAS1B. Interacts (via FFAT motif) with MOSPD2 (via MSP domain). In terms of tissue distribution, ubiquitous.

It is found in the late endosome. Functionally, binds phospholipids; exhibits strong binding to phosphatidic acid and weak binding to phosphatidylinositol 3-phosphate. Stabilizes GTP-bound RAB7A on late endosomes/lysosomes and alters functional properties of late endocytic compartments via its interaction with RAB7A. Binds 25-hydroxycholesterol and cholesterol. The chain is Oxysterol-binding protein-related protein 1 from Mus musculus (Mouse).